The chain runs to 530 residues: Alkyl hydroperoxide reductase subunit F (530 aa).

214 to 229 (DVLVVGGGPAGSAAAV) serves as a coordination point for FAD. Residues C344 and C347 are joined by a disulfide bond. NAD(+) is bound at residue 356–370 (RVAVIGGGNSGVEAA). 477 to 487 (TDVPGVFAAGD) provides a ligand contact to FAD.

The protein belongs to the class-II pyridine nucleotide-disulfide oxidoreductase family. As to quaternary structure, homodimer. FAD is required as a cofactor.

Serves to protect the cell against DNA damage by alkyl hydroperoxides. It can use either NADH or NADPH as electron donor for direct reduction of redox dyes or of alkyl hydroperoxides when combined with the AhpC protein. This is Alkyl hydroperoxide reductase subunit F (ahpF) from Xanthomonas campestris pv. phaseoli.